The following is a 378-amino-acid chain: Ribosomal RNA large subunit methyltransferase G (378 aa).

The protein belongs to the methyltransferase superfamily. RlmG family.

The protein localises to the cytoplasm. The enzyme catalyses guanosine(1835) in 23S rRNA + S-adenosyl-L-methionine = N(2)-methylguanosine(1835) in 23S rRNA + S-adenosyl-L-homocysteine + H(+). Functionally, specifically methylates the guanine in position 1835 (m2G1835) of 23S rRNA. The sequence is that of Ribosomal RNA large subunit methyltransferase G from Shewanella baltica (strain OS155 / ATCC BAA-1091).